Here is a 189-residue protein sequence, read N- to C-terminus: Myb-like protein T (189 aa).

The 52-residue stretch at 121–172 folds into the Myb-like domain; it reads NWSPDEQKALMVEVSTLGNKSEINWFFISQQLFLKGISRNARECQRKHESIQ.

The chain is Myb-like protein T (mybT) from Dictyostelium discoideum (Social amoeba).